The primary structure comprises 85 residues: Small muscular protein (85 aa).

The tract at residues Pro19–Pro63 is disordered. A Phosphoserine modification is found at Ser36. Residue Thr47 is modified to Phosphothreonine.

It belongs to the SMPX family.

Functionally, plays a role in the regulatory network through which muscle cells coordinate their structural and functional states during growth, adaptation, and repair. This chain is Small muscular protein (Smpx), found in Rattus norvegicus (Rat).